The following is a 536-amino-acid chain: ATPase expression protein 3 (536 aa).

PPR repeat units follow at residues 212 to 246 (TTTM…KKTP) and 386 to 421 (TTGS…GVTP).

It is found in the mitochondrion inner membrane. Its function is as follows. Required for respiration. This chain is ATPase expression protein 3 (AEP3), found in Eremothecium gossypii (strain ATCC 10895 / CBS 109.51 / FGSC 9923 / NRRL Y-1056) (Yeast).